We begin with the raw amino-acid sequence, 408 residues long: 3-ketoacyl-CoA thiolase B, peroxisomal (408 aa).

The active-site Acyl-thioester intermediate is cysteine 112. Active-site proton acceptor residues include histidine 366 and cysteine 394.

This sequence belongs to the thiolase-like superfamily. Thiolase family. Homodimer.

Its subcellular location is the peroxisome. It carries out the reaction an acyl-CoA + acetyl-CoA = a 3-oxoacyl-CoA + CoA. It functions in the pathway lipid metabolism; fatty acid metabolism. This is 3-ketoacyl-CoA thiolase B, peroxisomal from Candida tropicalis (Yeast).